The chain runs to 35 residues: Potassium channel toxin (35 aa).

3 disulfide bridges follow: Cys6–Cys25, Cys11–Cys30, and Cys15–Cys32.

This sequence belongs to the short scorpion toxin superfamily. Potassium channel inhibitor family. Alpha-KTx 21 subfamily. In terms of tissue distribution, expressed by the venom gland.

The protein resides in the secreted. Its function is as follows. Toxin that blocks voltage-gated potassium channels (Kv). The sequence is that of Potassium channel toxin from Tityus metuendus (Scorpion).